Consider the following 376-residue polypeptide: Heat-inducible transcription repressor HrcA (376 aa).

It belongs to the HrcA family.

In terms of biological role, negative regulator of class I heat shock genes (grpE-dnaK-dnaJ and groELS operons). Prevents heat-shock induction of these operons. This Chloroflexus aggregans (strain MD-66 / DSM 9485) protein is Heat-inducible transcription repressor HrcA.